We begin with the raw amino-acid sequence, 1720 residues long: TOG array regulator of axonemal microtubules protein 1 (1720 aa).

TOG regions lie at residues 94–312 (EEDT…RRLE) and 352–596 (PQEL…MPSS). HEAT repeat units follow at residues 175-212 (AFSLALLPQLVVSLREENPALRKDALQILHICLKRSPG), 214-247 (VLRTLIQQGLESTDARLRASTALLLPILLTTEDL), 251-289 (LDLTEVIISLARKLGDQETEEESETAFSALQQIGERLGQ), 345-384 (NLKFGIIPQELHSRLLDQEDYKNRTQAVEELKQVLGKFNP), 390-427 (SSLVGFISLLYNLLDDSNFKVVHGTLEVLHLLVIRLGE), 431-466 (QFLGPVIAASVKVLADNKLVIKQEYMKIFLKLMKEV), 467-504 (GPQQVLCLLLEHLKHKHSRVREEVVNICICSLLTYPSE), and 506-543 (FDLPKLSFDLAPALVDSKRRVRQAALEAFAVLASSMGS). Polar residues-rich tracts occupy residues 794–809 (FGSQTECTSSNGQNPS), 819–829 (PVSSPRTSPKH), 842–852 (DNSVNFSNSWP), and 868–877 (LVSQKSSDPT). Disordered stretches follow at residues 794–924 (FGSQ…SLLP), 970–998 (HSSLRSLRNSAAKKRAKLSGSTSDLESPD), and 1067–1087 (KKISHIAEQSPSAGSSSNPQQ). Over residues 1073–1087 (AEQSPSAGSSSNPQQ) the composition is skewed to polar residues. Residues 1256–1425 (EIALTEALRL…YIKDSVRNLQ (170 aa)) form a TOG 3 region. HEAT repeat units follow at residues 1294–1331 (TKLHETNFAVVQEVKNLRSGVSRAAVVCLSDLFTYLKK) and 1335–1372 (QELDTTVKVLLHKAGESNTFIREDVDKALRAMVNNVTP). Residues 1430–1462 (GEIPLDTPSAKGRRSHTGSVGNTRSSSVSRDAF) are disordered. The segment covering 1446-1458 (TGSVGNTRSSSVS) has biased composition (polar residues). The TOG 4 stretch occupies residues 1484–1720 (SLESAEYLKL…LLDMTILNEL (237 aa)). HEAT repeat units follow at residues 1485 to 1522 (LESAEYLKLITGLLNAKDFRDRINGIKQLLSDTENNQD), 1526 to 1563 (GNIVKIFDAFKSRLHDSNSKVNLVALETMHKMIPLLRD), and 1567 to 1605 (PIINMLIPAIVDNNLNSKNPGIYAAATNVVQALSQHVDN).

The protein belongs to the Crescerin family. In terms of assembly, interacts with ARMC9, CCDC66, CEP104 and CSPP1.

The protein localises to the cell projection. The protein resides in the cilium. It localises to the cytoplasm. It is found in the cytoskeleton. Its subcellular location is the cilium axoneme. In terms of biological role, involved in ciliogenesis. It is required for appropriate acetylation and polyglutamylation of ciliary microtubules, and regulation of cilium length. Interacts with microtubules and promotes microtubule polymerization via its HEAT repeat domains, especially those in TOG region 2 and 4. In Homo sapiens (Human), this protein is TOG array regulator of axonemal microtubules protein 1.